The following is a 107-amino-acid chain: UPF0060 membrane protein Sala_0701 (107 aa).

4 helical membrane-spanning segments follow: residues 4 to 24 (FAYIGAALAEIAGCFAFWAWL), 30 to 50 (VWWVVPGIASLALFAYLLTLV), 60 to 80 (AAYGGVYIAAALLWLWAVEGA), and 87 to 107 (LIGAAVCLGGAAIILFGPRGG).

It belongs to the UPF0060 family.

It localises to the cell inner membrane. The sequence is that of UPF0060 membrane protein Sala_0701 from Sphingopyxis alaskensis (strain DSM 13593 / LMG 18877 / RB2256) (Sphingomonas alaskensis).